The sequence spans 179 residues: uncharacterized protein (179 aa).

Over residues 1–10 (ATLSAGQPAS) the composition is skewed to polar residues. 3 disordered regions span residues 1–35 (ATLSAGQPASLTEAEPNTEKATLHRHPAPKRRGKC), 59–80 (VRRNSRRSEPLSGSQPRPPIVT), and 131–179 (ECPT…STCR). Residues 23 to 33 (LHRHPAPKRRG) show a composition bias toward basic residues. A compositionally biased stretch (basic residues) spans 149–158 (TPSRVRRSRR).

This is an uncharacterized protein from Human cytomegalovirus (strain AD169) (HHV-5).